Reading from the N-terminus, the 181-residue chain is Large ribosomal subunit protein uL10 (181 aa).

Belongs to the universal ribosomal protein uL10 family. As to quaternary structure, part of the ribosomal stalk of the 50S ribosomal subunit. The N-terminus interacts with L11 and the large rRNA to form the base of the stalk. The C-terminus forms an elongated spine to which L12 dimers bind in a sequential fashion forming a multimeric L10(L12)X complex.

Forms part of the ribosomal stalk, playing a central role in the interaction of the ribosome with GTP-bound translation factors. This chain is Large ribosomal subunit protein uL10, found in Chloroflexus aggregans (strain MD-66 / DSM 9485).